Here is a 403-residue protein sequence, read N- to C-terminus: MSDIKKVVLAYSGGLDTSVIVRWLQDTYNCEVVTFTADIGQGEEVEPARAKAEALGVKEIYIEDLREEFVRDYVFPMFRANTIYEGEYLLGTSIARPLIAKRLIDIANETGADAISHGATGKGNDQVRFELGAYALKPGVKVIAPWREWDLNSREKLLKYCEERNIPVEMKKGKSPYSMDANLLHISYEGINLEDPWAEAEEDMWRWSVSPEAAPDKPTYVELTYRKGDIVAVDGQEMKPHVVLETLNKLAGENGIGRLDIVENRYVGMKSRGCYETPGGTIMLRAHRAIESITLDREVAHLKDSLMPRYAEVIYNGYWWSPEREALQALIDQTQNYVNGTVRLKLYKGNVDVVGRKSDDSLFDEKIATFEEDQGAYDQKDAEGFIKLNALRLRIAAGKGRKL.

ATP contacts are provided by residues 10 to 18 (AYSGGLDTS) and Ala-37. L-citrulline contacts are provided by Tyr-88 and Ser-93. Residue Gly-118 participates in ATP binding. Residues Thr-120, Asn-124, and Asp-125 each contribute to the L-aspartate site. Asn-124 is a binding site for L-citrulline. Residues Arg-128, Ser-178, Ser-187, Glu-263, and Tyr-275 each contribute to the L-citrulline site.

It belongs to the argininosuccinate synthase family. Type 1 subfamily. As to quaternary structure, homotetramer.

The protein resides in the cytoplasm. It catalyses the reaction L-citrulline + L-aspartate + ATP = 2-(N(omega)-L-arginino)succinate + AMP + diphosphate + H(+). It participates in amino-acid biosynthesis; L-arginine biosynthesis; L-arginine from L-ornithine and carbamoyl phosphate: step 2/3. The polypeptide is Argininosuccinate synthase (Marinobacter nauticus (strain ATCC 700491 / DSM 11845 / VT8) (Marinobacter aquaeolei)).